Reading from the N-terminus, the 299-residue chain is Deoxyribonuclease-1-like 2 (299 aa).

The signal sequence occupies residues 1 to 20 (MGGPRALLAALWALEAAGTA). Residues Glu99 and His170 contribute to the active site. The cysteines at positions 209 and 245 are disulfide-linked.

Belongs to the DNase I family. Requires Mg(2+) as cofactor. Ca(2+) is required as a cofactor. Preferentially expressed in the skin and up-regulated during keratinocytes differentiation. Highly abundant (at protein level) in the stratum granulosum.

Its subcellular location is the cytoplasm. It localises to the secreted. Functionally, divalent cation-dependent acid DNA endonuclease involved in the breakdown of the nucleus during corneocyte formation of epidermal keratinocytes. May play an immune role by eliminating harmful DNA released into the extracellular environment by damaged epidermal cells. The polypeptide is Deoxyribonuclease-1-like 2 (DNASE1L2) (Homo sapiens (Human)).